The primary structure comprises 774 residues: FT-interacting protein 7 (774 aa).

Positions 1–17 (MMQRPFRPEEYSLKETS) are enriched in basic and acidic residues. The disordered stretch occupies residues 1 to 25 (MMQRPFRPEEYSLKETSPHLGGGAA). 3 C2 domains span residues 23–143 (GAAG…PQWY), 182–305 (IPGD…SQWY), and 346–472 (YSSD…THAY). 5 residues coordinate Ca(2+): Asp-56, Asp-62, Asp-109, Asp-111, and Asp-116. Transmembrane regions (helical) follow at residues 575-595 (IMGV…ICHW), 606-626 (ILFV…FLYL), and 714-734 (ATAL…VTPF).

The protein belongs to the MCTP family. As to quaternary structure, interacts with OSH1. Requires Ca(2+) as cofactor. As to expression, expressed in roots, stems, lemma, palea, pistils and ovules. Expressed at low levels in leaves.

Its subcellular location is the cell membrane. Functionally, promotes nuclear translocation of the transcription factor OSH1, which directly suppresses the auxin biosynthetic gene YUCCA4 during the late development of anthers. Reduction of auxin levels at late stage of anther development, after meiosis of microspore mother cells, is necessary for normal anther dehiscence and seed setting. Required for jasmonate (JA) biosynthetic genes expression and JA production in anthers. The polypeptide is FT-interacting protein 7 (Oryza sativa subsp. japonica (Rice)).